A 172-amino-acid chain; its full sequence is Small ribosomal subunit protein uS5 (172 aa).

Positions 17–80 (LREKMISVNR…DEARRKMVKV (64 aa)) constitute an S5 DRBM domain.

The protein belongs to the universal ribosomal protein uS5 family. Part of the 30S ribosomal subunit. Contacts proteins S4 and S8.

Functionally, with S4 and S12 plays an important role in translational accuracy. In terms of biological role, located at the back of the 30S subunit body where it stabilizes the conformation of the head with respect to the body. This chain is Small ribosomal subunit protein uS5, found in Cupriavidus taiwanensis (strain DSM 17343 / BCRC 17206 / CCUG 44338 / CIP 107171 / LMG 19424 / R1) (Ralstonia taiwanensis (strain LMG 19424)).